Here is a 798-residue protein sequence, read N- to C-terminus: Serine/threonine-protein kinase SIK2 (798 aa).

One can recognise a Protein kinase domain in the interval 26-277 (YDIERTLGKG…ISQIKQHKWM (252 aa)). ATP contacts are provided by residues 32–40 (LGKGNFAVV) and lysine 55. Aspartate 148 (proton acceptor) is an active-site residue. Threonine 181 carries the phosphothreonine modification. Serine 185 is modified (phosphoserine). The region spanning 302–342 (DYNEQVLGIMQTLGIDRQRTVESLQNSSYNHFAAIYYLLLE) is the UBA domain. The span at 351 to 361 (QLSSRPATGRQ) shows a compositional bias: polar residues. The interval 351–382 (QLSSRPATGRQQRPRSSEISNAEMPQDSLTSE) is disordered. Serine 575 is subject to Phosphoserine. The tract at residues 672 to 691 (ACPQTSQTSATNGLPPSDSA) is disordered. Residues 673–685 (CPQTSQTSATNGL) show a composition bias toward polar residues.

It belongs to the protein kinase superfamily. CAMK Ser/Thr protein kinase family. SNF1 subfamily. The cofactor is Mg(2+). Post-translationally, phosphorylated at Thr-181 by STK11/LKB1 in complex with STE20-related adapter-alpha (STRADA) pseudo kinase and CAB39. Ubiquitously expressed in embryonic tissue.

The protein resides in the cytoplasm. It carries out the reaction L-seryl-[protein] + ATP = O-phospho-L-seryl-[protein] + ADP + H(+). It catalyses the reaction L-threonyl-[protein] + ATP = O-phospho-L-threonyl-[protein] + ADP + H(+). Its activity is regulated as follows. Activated by phosphorylation on Thr-181. Its function is as follows. Phosphorylates IRS1 in insulin-stimulated adipocytes, potentially modulating the efficiency of insulin signal transduction. Inhibits CREB activity by phosphorylating and repressing the CREB-specific coactivators, CRTC1-3. In Gallus gallus (Chicken), this protein is Serine/threonine-protein kinase SIK2 (SIK2).